The sequence spans 89 residues: MAHKKAGGSSRNGRDSKGKRLGIKAFGGERVIPGNIIARQRGTTWHPGLNVGMGTDHTLFAKIEGVVEFHARANRTFISVRPVAAQAAE.

A disordered region spans residues 1-21 (MAHKKAGGSSRNGRDSKGKRL).

The protein belongs to the bacterial ribosomal protein bL27 family.

The polypeptide is Large ribosomal subunit protein bL27 (Bradyrhizobium sp. (strain BTAi1 / ATCC BAA-1182)).